The following is a 224-amino-acid chain: Ribonuclease 3 (224 aa).

An RNase III domain is found at I4–G127. E40 provides a ligand contact to Mg(2+). The active site involves D44. Residues D113 and E116 each coordinate Mg(2+). E116 is an active-site residue. The DRBM domain occupies D154–A223.

It belongs to the ribonuclease III family. As to quaternary structure, homodimer. The cofactor is Mg(2+).

It is found in the cytoplasm. The catalysed reaction is Endonucleolytic cleavage to 5'-phosphomonoester.. Its function is as follows. Digests double-stranded RNA. Involved in the processing of primary rRNA transcript to yield the immediate precursors to the large and small rRNAs (23S and 16S). Processes some mRNAs, and tRNAs when they are encoded in the rRNA operon. Processes pre-crRNA and tracrRNA of type II CRISPR loci if present in the organism. In Campylobacter jejuni subsp. jejuni serotype O:6 (strain 81116 / NCTC 11828), this protein is Ribonuclease 3.